The chain runs to 343 residues: tRNA N6-adenosine threonylcarbamoyltransferase (343 aa).

Histidine 120 and histidine 124 together coordinate Fe cation. Residues 142 to 146, aspartate 175, glycine 188, aspartate 192, and asparagine 281 contribute to the substrate site; that span reads VVSGG. Aspartate 310 contacts Fe cation.

This sequence belongs to the KAE1 / TsaD family. It depends on Fe(2+) as a cofactor.

Its subcellular location is the cytoplasm. The enzyme catalyses L-threonylcarbamoyladenylate + adenosine(37) in tRNA = N(6)-L-threonylcarbamoyladenosine(37) in tRNA + AMP + H(+). Functionally, required for the formation of a threonylcarbamoyl group on adenosine at position 37 (t(6)A37) in tRNAs that read codons beginning with adenine. Is involved in the transfer of the threonylcarbamoyl moiety of threonylcarbamoyl-AMP (TC-AMP) to the N6 group of A37, together with TsaE and TsaB. TsaD likely plays a direct catalytic role in this reaction. The polypeptide is tRNA N6-adenosine threonylcarbamoyltransferase (Bacillus anthracis).